The sequence spans 199 residues: WASH complex subunit 3 (199 aa).

Residues 47-76 (VCEEKLSALSLRIQQIETTLNILEAKLSSI) are a coiled coil. Positions 93–120 (NISNGHLPSQPDAQSVVVSPQSDNNSMN) are enriched in polar residues. 2 disordered regions span residues 93–136 (NISN…NITT) and 170–199 (PDLLETPDAPVPDGEPEAEESSDSESSFSD). A compositionally biased stretch (acidic residues) spans 183-192 (GEPEAEESSD).

It belongs to the CCDC53 family. As to quaternary structure, component of the WASH complex.

This Xenopus laevis (African clawed frog) protein is WASH complex subunit 3.